The chain runs to 426 residues: Serine--tRNA ligase (426 aa).

L-serine is bound at residue 233-235; it reads TAE. Residue 264 to 266 coordinates ATP; sequence RSE. Glutamate 287 provides a ligand contact to L-serine. Position 351–354 (351–354) interacts with ATP; it reads EISS. L-serine is bound at residue serine 387.

This sequence belongs to the class-II aminoacyl-tRNA synthetase family. Type-1 seryl-tRNA synthetase subfamily. As to quaternary structure, homodimer. The tRNA molecule binds across the dimer.

It is found in the cytoplasm. It catalyses the reaction tRNA(Ser) + L-serine + ATP = L-seryl-tRNA(Ser) + AMP + diphosphate + H(+). It carries out the reaction tRNA(Sec) + L-serine + ATP = L-seryl-tRNA(Sec) + AMP + diphosphate + H(+). It functions in the pathway aminoacyl-tRNA biosynthesis; selenocysteinyl-tRNA(Sec) biosynthesis; L-seryl-tRNA(Sec) from L-serine and tRNA(Sec): step 1/1. In terms of biological role, catalyzes the attachment of serine to tRNA(Ser). Is also able to aminoacylate tRNA(Sec) with serine, to form the misacylated tRNA L-seryl-tRNA(Sec), which will be further converted into selenocysteinyl-tRNA(Sec). The polypeptide is Serine--tRNA ligase (Azotobacter vinelandii (strain DJ / ATCC BAA-1303)).